Consider the following 340-residue polypeptide: MTNKNAYAQSGVDVEAGYEVVERIKKHVARTERAGVMGALGGFGGMFDLSKTGVKEPVLISGTDGVGTKLMLAIKYDKHDTIGQDCVAMCVNDIIAAGAEPLYFLDYVATGKNEPAKLEQVVAGVAEGCVQAGAALIGGETAEMPGMYGEDDYDLAGFAVGVAEKSQIIDGSKVVEGDVLLGLASSGIHSNGYSLVRRVFADYTGEEVLPELEGKKLKEVLLEPTRIYVKAVLPLIKEELVNGIAHITGGGFIENVPRMFADDLAAEIDESKVPVLPIFKALEKYGQIKHEEMFEIFNMGVGLMLAVSPENVERVKELLDEAVYEIGRIVKKENESVIIK.

This sequence belongs to the AIR synthase family.

It localises to the cytoplasm. The catalysed reaction is 2-formamido-N(1)-(5-O-phospho-beta-D-ribosyl)acetamidine + ATP = 5-amino-1-(5-phospho-beta-D-ribosyl)imidazole + ADP + phosphate + H(+). Its pathway is purine metabolism; IMP biosynthesis via de novo pathway; 5-amino-1-(5-phospho-D-ribosyl)imidazole from N(2)-formyl-N(1)-(5-phospho-D-ribosyl)glycinamide: step 2/2. The polypeptide is Phosphoribosylformylglycinamidine cyclo-ligase (Streptococcus pneumoniae (strain 70585)).